The following is a 735-amino-acid chain: Polycomb protein sop-2 (735 aa).

Positions 1–15 (MSSNLTSNEMSSTSA) are enriched in polar residues. Disordered regions lie at residues 1–59 (MSSN…SSSS), 223–288 (AARS…APAA), and 300–534 (PQES…PVLQ). Residues 224 to 503 (ARSSRMAARR…APATPATPAS (280 aa)) are RNA-binding. Low complexity predominate over residues 239 to 288 (YRGAFRGAARGAPSRRPAPAAEVAPETPVAAPMAPAAPAAPATPEAAPAA). 2 stretches are compositionally biased toward basic and acidic residues: residues 317 to 355 (DTSK…DGGR) and 389 to 398 (RAAEKKKPED). A compositionally biased stretch (acidic residues) spans 399–413 (SDAAEEQEVEMEVDN). The span at 450–470 (VEPKKEPVDEPAEKIPKRSEA) shows a compositional bias: basic and acidic residues. A compositionally biased stretch (low complexity) spans 471–504 (APEVPATATTKEAPPSTSSSPPDAPATPATPASS). Residues 520–534 (LTGSPPESETPPVLQ) show a composition bias toward polar residues. Residues 621-712 (LVENNHEATL…YGTEVLNHYR (92 aa)) form an SAM-like region.

In terms of assembly, homodimer. Interacts with ubc-9. Binds through its N-terminal region to the N-terminal region of sor-1. Sumoylated by ubc-9. Sumoylation is required for the transcriptional regulation of homeotic genes. Widely expressed. Weakly expressed in most somatic cells of 50-cell stage embryos. At 200 cell stage, it is strongly expressed. By comma stage, it is expressed in most somatic cells.

The protein resides in the nucleus. In terms of biological role, polycomb group (PcG) protein. PcG proteins act by forming multiprotein complexes, which are required to maintain the transcriptionally repressive state of homeotic genes throughout development. PcG proteins are not required to initiate repression, but to maintain it during later stages of development. Also required to repress expression of other genes and for localization of sor-1. Binds RNA. This is Polycomb protein sop-2 (sop-2) from Caenorhabditis elegans.